A 202-amino-acid chain; its full sequence is Elongation factor Ts, chloroplastic (202 aa).

This sequence belongs to the EF-Ts family.

The protein resides in the plastid. The protein localises to the chloroplast. Its function is as follows. Associates with the EF-Tu.GDP complex and induces the exchange of GDP to GTP. It remains bound to the aminoacyl-tRNA.EF-Tu.GTP complex up to the GTP hydrolysis stage on the ribosome. The sequence is that of Elongation factor Ts, chloroplastic (tsf) from Phaeodactylum tricornutum (strain CCAP 1055/1).